Here is a 132-residue protein sequence, read N- to C-terminus: CDGSH iron-sulfur domain-containing protein 2 homolog (132 aa).

At 1–35 (MEPISHVVKSSLPNYLSSLPIPDSFGGWFKLSFKD) the chain is on the lumenal side. Residues 36 to 58 (WLALIPPTVVVAGLGYTTYLAFC) traverse the membrane as a helical segment. Over 59-132 (PAARCAGKDS…NVGPVVVKKK (74 aa)) the chain is Cytoplasmic. Residues Cys-98, Cys-100, Cys-109, and His-113 each coordinate [2Fe-2S] cluster.

This sequence belongs to the CISD protein family. CISD2 subfamily. It depends on [2Fe-2S] cluster as a cofactor.

The protein localises to the endoplasmic reticulum membrane. The chain is CDGSH iron-sulfur domain-containing protein 2 homolog from Drosophila persimilis (Fruit fly).